The sequence spans 84 residues: Small, acid-soluble spore protein gamma-type (84 aa).

Composition is skewed to polar residues over residues 1–25 (MANS…SAAG) and 34–44 (ASETNAQQVRK). The segment at 1-84 (MANSNNFSKT…SAEQNKQQNS (84 aa)) is disordered. Repeats lie at residues 21–47 (QSAA…KQNQ) and 48–74 (QSAG…QQNQ). Low complexity-rich tracts occupy residues 45-57 (QNQQ…GQFG) and 71-84 (QQNQ…QQNS).

This sequence belongs to the gamma-type SASP family.

In terms of biological role, SASP are proteins degraded in the first minutes of spore germination and provide amino acids for both new protein synthesis and metabolism. These proteins may be involved in dormant spore's high resistance to UV light. This is Small, acid-soluble spore protein gamma-type (sspE) from Bacillus subtilis (strain 168).